We begin with the raw amino-acid sequence, 186 residues long: Histone deacetylase complex subunit SAP25 (186 aa).

Disordered stretches follow at residues 1-25 (MSPLPLRDPSHQANAGPRLVEPSCG) and 148-186 (EQTPNCVASSLPSTSCPDPVSVSEDPGPSGDQSCSGTDT). Polar residues-rich tracts occupy residues 148–163 (EQTPNCVASSLPSTSC) and 177–186 (GDQSCSGTDT).

In terms of assembly, may be a component of the mSIN3A corepressor complex. Interacts with SIN3A and HDAC2. Widely expressed.

The protein localises to the nucleus. It localises to the cytoplasm. In terms of biological role, involved in the transcriptional repression mediated by the mSIN3A but not the N-CoR corepressor complex. This Mus musculus (Mouse) protein is Histone deacetylase complex subunit SAP25 (Sap25).